Here is a 20-residue protein sequence, read N- to C-terminus: Methyl-coenzyme M reductase subunit gamma (20 aa).

Positions 1–20 (AYERQFYPGATSVAENNIGH) are disordered.

It belongs to the methyl-coenzyme M reductase gamma subunit family. As to quaternary structure, MCR from M.thermophila is a heterotrimer composed of an alpha, a beta, and a gamma subunit. Coenzyme F430 serves as cofactor.

It is found in the cytoplasm. It catalyses the reaction coenzyme B + methyl-coenzyme M = methane + coenzyme M-coenzyme B heterodisulfide. It functions in the pathway one-carbon metabolism; methyl-coenzyme M reduction; methane from methyl-coenzyme M: step 1/1. Its function is as follows. Component of the methyl-coenzyme M reductase (MCR) I that catalyzes the reductive cleavage of methyl-coenzyme M (CoM-S-CH3 or 2-(methylthio)ethanesulfonate) using coenzyme B (CoB or 7-mercaptoheptanoylthreonine phosphate) as reductant which results in the production of methane and the mixed heterodisulfide of CoB and CoM (CoM-S-S-CoB). This is the final step in methanogenesis. The sequence is that of Methyl-coenzyme M reductase subunit gamma from Methanosarcina thermophila.